A 351-amino-acid chain; its full sequence is Probable dual-specificity RNA methyltransferase RlmN (351 aa).

Glutamate 92 acts as the Proton acceptor in catalysis. The Radical SAM core domain maps to 98 to 334; the sequence is SGDRLTVCVS…VRWSKGLGAD (237 aa). An intrachain disulfide couples cysteine 105 to cysteine 337. 3 residues coordinate [4Fe-4S] cluster: cysteine 112, cysteine 116, and cysteine 119. Residues 159–160, serine 189, 218–220, and asparagine 294 each bind S-adenosyl-L-methionine; these read GE and SLH. Cysteine 337 serves as the catalytic S-methylcysteine intermediate.

The protein belongs to the radical SAM superfamily. RlmN family. It depends on [4Fe-4S] cluster as a cofactor.

Its subcellular location is the cytoplasm. It catalyses the reaction adenosine(2503) in 23S rRNA + 2 reduced [2Fe-2S]-[ferredoxin] + 2 S-adenosyl-L-methionine = 2-methyladenosine(2503) in 23S rRNA + 5'-deoxyadenosine + L-methionine + 2 oxidized [2Fe-2S]-[ferredoxin] + S-adenosyl-L-homocysteine. The enzyme catalyses adenosine(37) in tRNA + 2 reduced [2Fe-2S]-[ferredoxin] + 2 S-adenosyl-L-methionine = 2-methyladenosine(37) in tRNA + 5'-deoxyadenosine + L-methionine + 2 oxidized [2Fe-2S]-[ferredoxin] + S-adenosyl-L-homocysteine. Specifically methylates position 2 of adenine 2503 in 23S rRNA and position 2 of adenine 37 in tRNAs. The sequence is that of Probable dual-specificity RNA methyltransferase RlmN from Synechococcus sp. (strain ATCC 27144 / PCC 6301 / SAUG 1402/1) (Anacystis nidulans).